Reading from the N-terminus, the 180-residue chain is Adenine phosphoribosyltransferase (180 aa).

The protein belongs to the purine/pyrimidine phosphoribosyltransferase family. In terms of assembly, homodimer.

It is found in the cytoplasm. The enzyme catalyses AMP + diphosphate = 5-phospho-alpha-D-ribose 1-diphosphate + adenine. It participates in purine metabolism; AMP biosynthesis via salvage pathway; AMP from adenine: step 1/1. Functionally, catalyzes a salvage reaction resulting in the formation of AMP, that is energically less costly than de novo synthesis. The polypeptide is Adenine phosphoribosyltransferase (Mycolicibacterium paratuberculosis (strain ATCC BAA-968 / K-10) (Mycobacterium paratuberculosis)).